A 282-amino-acid chain; its full sequence is Bifunctional protein FolD (282 aa).

Residues 166–168 (GAS) and Ile-232 contribute to the NADP(+) site.

It belongs to the tetrahydrofolate dehydrogenase/cyclohydrolase family. In terms of assembly, homodimer.

The catalysed reaction is (6R)-5,10-methylene-5,6,7,8-tetrahydrofolate + NADP(+) = (6R)-5,10-methenyltetrahydrofolate + NADPH. It carries out the reaction (6R)-5,10-methenyltetrahydrofolate + H2O = (6R)-10-formyltetrahydrofolate + H(+). It participates in one-carbon metabolism; tetrahydrofolate interconversion. Its function is as follows. Catalyzes the oxidation of 5,10-methylenetetrahydrofolate to 5,10-methenyltetrahydrofolate and then the hydrolysis of 5,10-methenyltetrahydrofolate to 10-formyltetrahydrofolate. The chain is Bifunctional protein FolD from Haemophilus influenzae (strain PittEE).